Here is a 1366-residue protein sequence, read N- to C-terminus: DNA-directed RNA polymerase subunit beta (1366 aa).

Belongs to the RNA polymerase beta chain family. In terms of assembly, the RNAP catalytic core consists of 2 alpha, 1 beta, 1 beta' and 1 omega subunit. When a sigma factor is associated with the core the holoenzyme is formed, which can initiate transcription.

The catalysed reaction is RNA(n) + a ribonucleoside 5'-triphosphate = RNA(n+1) + diphosphate. In terms of biological role, DNA-dependent RNA polymerase catalyzes the transcription of DNA into RNA using the four ribonucleoside triphosphates as substrates. The sequence is that of DNA-directed RNA polymerase subunit beta from Polynucleobacter necessarius subsp. necessarius (strain STIR1).